The following is a 225-amino-acid chain: Perlwapin-like protein (225 aa).

A signal peptide spans 1-19 (MNHLWLFIVTVSCIYLVYG). 4 cysteine pairs are disulfide-bonded: Cys27–Cys57, Cys36–Cys61, Cys43–Cys56, and Cys49–Cys65. The WAP 1; atypical domain occupies 27–68 (CKVKFMGTACPLGRLVCEEDGDCLGVNQVCCYDGCGTTCHNK). N-linked (GlcNAc...) asparagine glycosylation occurs at Asn67. The 53-residue stretch at 117 to 169 (IIPSPELLCPVVTVRYAFCRFSTYTPCHTSNDCAVPGMKCCPDVCGKRCKFPI) folds into the WAP 2 domain. 4 disulfide bridges follow: Cys125–Cys157, Cys135–Cys161, Cys143–Cys156, and Cys149–Cys165. Residue Asn170 is glycosylated (N-linked (GlcNAc...) asparagine). The disordered stretch occupies residues 176–225 (QFQQTPLKPTVPLPQYQQTPLQPTVPSSQPPLQPTVPSPQSYNYKGACST). Over residues 188–201 (LPQYQQTPLQPTVP) the composition is skewed to low complexity. Residues 203 to 212 (SQPPLQPTVP) are compositionally biased toward pro residues. Over residues 213–225 (SPQSYNYKGACST) the composition is skewed to polar residues.

Component of the acid-soluble organic matrix of calcified layers of the shell (at protein level).

Its subcellular location is the secreted. The sequence is that of Perlwapin-like protein from Lottia gigantea (Giant owl limpet).